The following is a 95-amino-acid chain: Large ribosomal subunit protein bL25 (95 aa).

It belongs to the bacterial ribosomal protein bL25 family. Part of the 50S ribosomal subunit; part of the 5S rRNA/L5/L18/L25 subcomplex. Contacts the 5S rRNA. Binds to the 5S rRNA independently of L5 and L18.

In terms of biological role, this is one of the proteins that binds to the 5S RNA in the ribosome where it forms part of the central protuberance. The sequence is that of Large ribosomal subunit protein bL25 from Shewanella woodyi (strain ATCC 51908 / MS32).